The primary structure comprises 341 residues: MQIVQIEQAPKDYISDIKIIPSKSLLLITSWDGSLTVYKFDIQAKNVDLLQSLRYKHPLLCCNFIDNTDLQIYVGTVQGEILKVDLIGSPSFQALTNNEANLGICRICKYGDDKLIAASWDGLIEVIDPRNYGDGVIAVKNLNSNNTKVKNKIFTMDTNSSRLIVGMNNSQVQWFRLPLCEDDNGTIEESGLKYQIRDVALLPKEQEGYACSSIDGRVAVEFFDDQGDDYNSSKRFAFRCHRLNLKDTNLAYPVNSIEFSPRHKFLYTAGSDGIISCWNLQTRKKIKNFAKFNEDSVVKIACSDNILCLATSDDTFKTNAAIDQTIELNASSIYIIFDYEN.

7 WD repeats span residues 9-48 (APKD…KNVD), 54-96 (RYKH…QALT), 97-137 (NNEA…DGVI), 144-185 (SNNT…DDNG), 191-233 (GLKY…YNSS), 249-288 (NLAY…KIKN), and 292-329 (FNED…IELN).

The protein belongs to the WD repeat BUB3 family. Component of the mitotic checkpoint complex (MCC) which consists of MAD2, MAD3, BUB3 and CDC20. Part of complex consisting of MAD1, BUB1 and BUB3 after activation of spindle checkpoint. Part of the BUB1-BUB3 complex, composed of BUB1 and BUB3. Interacts with SPC105 (via phosphorylated MELT motifs); the interaction is direct and occurs when part of the BUB1-BUB3 complex. Interacts with MAD3; the interaction is direct. Post-translationally, phosphorylated by BUB1.

The protein localises to the nucleus. It localises to the chromosome. Its subcellular location is the centromere. The protein resides in the kinetochore. In terms of biological role, involved in mitotic spindle assembly checkpoint signaling, a process that delays anaphase until chromosomes are bioriented on the spindle, and in the repair of incorrect mitotic kinetochore-spindle microtubule attachments. Component of the mitotic checkpoint complex (MCC) which inhibits the ubiquitin ligase activity of the anaphase promoting complex/cyclosome (APC/C) by preventing its activation by CDC20. This Saccharomyces cerevisiae (strain ATCC 204508 / S288c) (Baker's yeast) protein is Spindle assembly checkpoint protein BUB3 (BUB3).